The primary structure comprises 384 residues: S-adenosylmethionine synthase (384 aa).

His15 serves as a coordination point for ATP. Asp17 lines the Mg(2+) pocket. Glu43 is a binding site for K(+). Residues Glu56 and Gln99 each coordinate L-methionine. A flexible loop region spans residues 99–109 (QSPDINQGVDK). Residues 164–166 (DAK), 230–231 (RF), Asp239, 245–246 (RK), Ala262, and Lys266 contribute to the ATP site. Asp239 provides a ligand contact to L-methionine. Lys270 contacts L-methionine.

Belongs to the AdoMet synthase family. In terms of assembly, homotetramer; dimer of dimers. The cofactor is Mg(2+). K(+) serves as cofactor.

Its subcellular location is the cytoplasm. The enzyme catalyses L-methionine + ATP + H2O = S-adenosyl-L-methionine + phosphate + diphosphate. The protein operates within amino-acid biosynthesis; S-adenosyl-L-methionine biosynthesis; S-adenosyl-L-methionine from L-methionine: step 1/1. Its function is as follows. Catalyzes the formation of S-adenosylmethionine (AdoMet) from methionine and ATP. The overall synthetic reaction is composed of two sequential steps, AdoMet formation and the subsequent tripolyphosphate hydrolysis which occurs prior to release of AdoMet from the enzyme. This Vibrio vulnificus (strain YJ016) protein is S-adenosylmethionine synthase.